The sequence spans 234 residues: Transcriptional regulatory protein WalR (234 aa).

The region spanning 3–116 is the Response regulatory domain; it reads KILIVDDEKP…ELQARVKALL (114 aa). 4-aspartylphosphate is present on Asp52. A DNA-binding region (ompR/PhoB-type) is located at residues 133-232; sequence PQPIQIGDLE…RRGVGYYMRN (100 aa).

As to quaternary structure, monomer. Homodimer. In terms of processing, phosphorylated by WalK; can also be dephosphorylated by WalK.

The protein localises to the cytoplasm. Its function is as follows. Member of the two-component regulatory system WalK/WalR that regulates genes involved in cell wall metabolism. Binds to the promoter region of the transcription factor fabT gene in the fabTH-acp operon in vitro. Inhibits transcription of fabT, probably acting in an unphosphorylated form, thereby playing a role in the regulation of fatty acid biosynthesis. Essential for normal growth in vitro. Required for maintaining normal cellular morphology, acting, at least in part, by regulating peptidoglycan hydrolase pcsB. Involved in maintaining expression of WalRK regulon genes in exponentially growing cells. This is Transcriptional regulatory protein WalR from Streptococcus pneumoniae serotype 2 (strain D39 / NCTC 7466).